The sequence spans 383 residues: Gap junction alpha-1 protein (383 aa).

Residues 2 to 23 are Cytoplasmic-facing; sequence GDWSALGKLLDKVQAYSTAGGK. Ser-5 bears the Phosphoserine mark. A helical membrane pass occupies residues 24 to 44; that stretch reads VWLSVLFIFRILLLGTAVESA. Over 45 to 76 the chain is Extracellular; the sequence is WGDEQSAFRCNTQQPGCENVCYDKSFPISHVR. 2 disulfides stabilise this stretch: Cys-54–Cys-193 and Cys-188–Cys-199. A helical membrane pass occupies residues 77 to 97; that stretch reads FWVLQIIFVSVPTLLYLAHVF. Residues 98–156 are Cytoplasmic-facing; the sequence is YVMRKEEKLNKKEEELKVVAQTDGANVDMHLKQIEIKKFKYGIEEHGKVKMRGGLLRTY. Residue Lys-145 forms a Glycyl lysine isopeptide (Lys-Gly) (interchain with G-Cter in SUMO) linkage. Residues 157-177 form a helical membrane-spanning segment; that stretch reads IISILFKSVFEVAFLLIQWYI. Topologically, residues 178 to 208 are extracellular; the sequence is YGFSLSAVYTCKRDPCPHQVDCFLSRPTEKT. Residues 209–229 form a helical membrane-spanning segment; sequence IFIIFMLVVSLVSLALNIIEL. Topologically, residues 230-383 are cytoplasmic; it reads FYVFFKGVKD…SRPRPDDLEI (154 aa). Lys-238 is covalently cross-linked (Glycyl lysine isopeptide (Lys-Gly) (interchain with G-Cter in SUMO)). The tract at residues 245 to 383 is interaction with NOV; sequence SDPYHTTTGP…SRPRPDDLEI (139 aa). Phosphotyrosine is present on Tyr-248. Residues Ser-256, Ser-258, and Ser-263 each carry the phosphoserine modification. Positions 265–383 are interaction with UBQLN4; it reads KYAYFNGCSS…SRPRPDDLEI (119 aa). Cys-272 carries the post-translational modification S-nitrosocysteine. Position 276 is a phosphothreonine (Thr-276). Ser-307 and Ser-315 each carry phosphoserine. Residues 318–333 show a composition bias toward polar residues; that stretch reads QNRMGQAGSTISNSHA. The tract at residues 318–383 is disordered; that stretch reads QNRMGQAGST…SRPRPDDLEI (66 aa). Position 326 is a phosphoserine; by CK1 (Ser-326). Phosphothreonine is present on Thr-327. A phosphoserine; by CK1 mark is found at Ser-329 and Ser-331. The segment covering 339–352 has biased composition (basic and acidic residues); it reads PDDHQNSKKLDAGH. Phosphoserine occurs at positions 345 and 366. Residues 363–375 show a composition bias toward low complexity; it reads RPSSRASSRASSR. Ser-369 carries the phosphoserine; by PKC/PRKCG and PKC/PRKCD modification. Phosphoserine occurs at positions 370 and 374.

Belongs to the connexin family. Alpha-type (group II) subfamily. A connexon is composed of a hexamer of connexins. Interacts with SGSM3. Interacts with RIC1/CIP150. Interacts with CNST and CSNK1D. Interacts (via C-terminus) with TJP1. Interacts (via C-terminus) with SRC (via SH3 domain). Interacts (not ubiquitinated) with UBQLN4 (via UBA domain). Interacts with NOV. Interacts with TMEM65. Interacts with ANK3/ANKG and PKP2. Post-translationally, phosphorylation at Ser-326, Ser-329 and Ser-331 by CK1 modulates gap junction assembly. Phosphorylated at Ser-369 by PRKCG; phosphorylation induces disassembly of gap junction plaques and inhibition of gap junction activity. Phosphorylation at Ser-369 by PRKCD triggers its internalization into small vesicles leading to proteasome-mediated degradation. In terms of processing, sumoylated with SUMO1, SUMO2 and SUMO3, which may regulate the level of functional Cx43 gap junctions at the plasma membrane. May be desumoylated by SENP1 or SENP2. Acetylated in the developing cortex; leading to delocalization from the cell membrane.

The protein resides in the cell membrane. Its subcellular location is the cell junction. It is found in the gap junction. It localises to the endoplasmic reticulum. Functionally, gap junction protein that acts as a regulator of bladder capacity. A gap junction consists of a cluster of closely packed pairs of transmembrane channels, the connexons, through which materials of low MW diffuse from one cell to a neighboring cell. May play a critical role in the physiology of hearing by participating in the recycling of potassium to the cochlear endolymph. Negative regulator of bladder functional capacity: acts by enhancing intercellular electrical and chemical transmission, thus sensitizing bladder muscles to cholinergic neural stimuli and causing them to contract. May play a role in cell growth inhibition through the regulation of NOV expression and localization. Plays an essential role in gap junction communication in the ventricles. The chain is Gap junction alpha-1 protein (GJA1) from Bos taurus (Bovine).